Reading from the N-terminus, the 625-residue chain is Phosphomethylpyrimidine synthase (625 aa).

Residues Asn231, Met260, Tyr289, His325, Ser345–Gly347, Asp386–Arg389, and Glu425 each bind substrate. Zn(2+) is bound at residue His429. Residue Tyr452 participates in substrate binding. His493 contributes to the Zn(2+) binding site. Residues Cys573, Cys576, and Cys581 each contribute to the [4Fe-4S] cluster site.

The protein belongs to the ThiC family. Homodimer. Requires [4Fe-4S] cluster as cofactor.

The catalysed reaction is 5-amino-1-(5-phospho-beta-D-ribosyl)imidazole + S-adenosyl-L-methionine = 4-amino-2-methyl-5-(phosphooxymethyl)pyrimidine + CO + 5'-deoxyadenosine + formate + L-methionine + 3 H(+). It participates in cofactor biosynthesis; thiamine diphosphate biosynthesis. Catalyzes the synthesis of the hydroxymethylpyrimidine phosphate (HMP-P) moiety of thiamine from aminoimidazole ribotide (AIR) in a radical S-adenosyl-L-methionine (SAM)-dependent reaction. In Acinetobacter baumannii (strain SDF), this protein is Phosphomethylpyrimidine synthase.